A 218-amino-acid polypeptide reads, in one-letter code: MKTNELKRLVARKVVDYINPGSVIGIGTGSTVSYFIEVLSTIKNLISGAVSSSNFSTACLKRIGIPIYDLSKINSLVLYIDSADEINPQLQMIKGGGAALTREKIIAATAEKFICIADESKQVEILGKVPLPIEIIPMARSYISNEIIKIGGMPKYRKNVITDNGNVIIDVFNLVITDPVCLENKINSFPGVVSVGLFATRKADIALIGTSSGVQVIY.

Substrate is bound by residues 28-31, 81-84, and 94-97; these read TGST, DSAD, and KGGG. The active-site Proton acceptor is the Glu-103. Lys-121 is a substrate binding site.

It belongs to the ribose 5-phosphate isomerase family. In terms of assembly, homodimer.

The enzyme catalyses aldehydo-D-ribose 5-phosphate = D-ribulose 5-phosphate. Its pathway is carbohydrate degradation; pentose phosphate pathway; D-ribose 5-phosphate from D-ribulose 5-phosphate (non-oxidative stage): step 1/1. Catalyzes the reversible conversion of ribose-5-phosphate to ribulose 5-phosphate. This is Ribose-5-phosphate isomerase A from Buchnera aphidicola subsp. Baizongia pistaciae (strain Bp).